The chain runs to 388 residues: MSEQIVTPESSTPVVSNNEAKINLLDLNRQQMREFFKNLGEKPFRADQVMKWMYHYCCDNFDEMTDINKVLRGKLKEVAEIRAPEVVEEQRSSDGTIKWAIAVGDQRVETVYIPEDDRATLCVSSQVGCALECKFCSTAQQGFNRNLRVSEIIGQVWRAAKIVGAAKVTGQRPITNVVMMGMGEPLLNLTNVVPAMEIMLDDFGFGLSKRRVTLSTSGVVPALDKLGDMIDVALAISLHAPNDAIRDEIVPINKKYNIETFLGAVRRYLEKSNANQGRVTIEYVMLDHVNDGTEHAHQLAELLKETPCKINLIPWNPFPGAPYGRSSNSRIDRFSKVLMSYGFTTIVRKTRGDDIDAACGQLAGDVIDRTKRTLRKRMQGEAIDIKAI.

The Proton acceptor role is filled by glutamate 109. A Radical SAM core domain is found at 115–354; the sequence is EDDRATLCVS…TIVRKTRGDD (240 aa). Residues cysteine 122 and cysteine 359 are joined by a disulfide bond. [4Fe-4S] cluster-binding residues include cysteine 129, cysteine 133, and cysteine 136. S-adenosyl-L-methionine-binding positions include 183–184, serine 215, 237–239, and asparagine 316; these read GE and SLH. The active-site S-methylcysteine intermediate is cysteine 359.

This sequence belongs to the radical SAM superfamily. RlmN family. The cofactor is [4Fe-4S] cluster.

It localises to the cytoplasm. It carries out the reaction adenosine(2503) in 23S rRNA + 2 reduced [2Fe-2S]-[ferredoxin] + 2 S-adenosyl-L-methionine = 2-methyladenosine(2503) in 23S rRNA + 5'-deoxyadenosine + L-methionine + 2 oxidized [2Fe-2S]-[ferredoxin] + S-adenosyl-L-homocysteine. It catalyses the reaction adenosine(37) in tRNA + 2 reduced [2Fe-2S]-[ferredoxin] + 2 S-adenosyl-L-methionine = 2-methyladenosine(37) in tRNA + 5'-deoxyadenosine + L-methionine + 2 oxidized [2Fe-2S]-[ferredoxin] + S-adenosyl-L-homocysteine. In terms of biological role, specifically methylates position 2 of adenine 2503 in 23S rRNA and position 2 of adenine 37 in tRNAs. m2A2503 modification seems to play a crucial role in the proofreading step occurring at the peptidyl transferase center and thus would serve to optimize ribosomal fidelity. This Salmonella arizonae (strain ATCC BAA-731 / CDC346-86 / RSK2980) protein is Dual-specificity RNA methyltransferase RlmN.